A 255-amino-acid polypeptide reads, in one-letter code: Imidazole glycerol phosphate synthase subunit HisF (255 aa).

Residues Asp12 and Asp131 contribute to the active site.

It belongs to the HisA/HisF family. In terms of assembly, heterodimer of HisH and HisF.

It is found in the cytoplasm. It carries out the reaction 5-[(5-phospho-1-deoxy-D-ribulos-1-ylimino)methylamino]-1-(5-phospho-beta-D-ribosyl)imidazole-4-carboxamide + L-glutamine = D-erythro-1-(imidazol-4-yl)glycerol 3-phosphate + 5-amino-1-(5-phospho-beta-D-ribosyl)imidazole-4-carboxamide + L-glutamate + H(+). The protein operates within amino-acid biosynthesis; L-histidine biosynthesis; L-histidine from 5-phospho-alpha-D-ribose 1-diphosphate: step 5/9. IGPS catalyzes the conversion of PRFAR and glutamine to IGP, AICAR and glutamate. The HisF subunit catalyzes the cyclization activity that produces IGP and AICAR from PRFAR using the ammonia provided by the HisH subunit. This chain is Imidazole glycerol phosphate synthase subunit HisF, found in Sphingopyxis alaskensis (strain DSM 13593 / LMG 18877 / RB2256) (Sphingomonas alaskensis).